Reading from the N-terminus, the 200-residue chain is NAD--protein ADP-ribosyltransferase modA (200 aa).

Arg72 is a binding site for NAD(+). The active site involves Glu165.

This sequence belongs to the Tevenvirinae NAD--protein ADP-ribosyltransferase modA family.

It is found in the virion. It carries out the reaction L-arginyl-[protein] + NAD(+) = N(omega)-(ADP-D-ribosyl)-L-arginyl-[protein] + nicotinamide + H(+). Functionally, ADP-ribosyltransferase that efficiently ADP-ribosylates both alpha subunits of host RNA polymerase RPOA. The ModA-induced ADP-ribosylation of RPOA alpha subunits inhibits transcription from viral early promoters. This Enterobacteria phage T4 (Bacteriophage T4) protein is NAD--protein ADP-ribosyltransferase modA.